A 424-amino-acid chain; its full sequence is 3-isopropylmalate dehydratase large subunit (424 aa).

Residues cysteine 299, cysteine 359, and cysteine 362 each contribute to the [4Fe-4S] cluster site.

Belongs to the aconitase/IPM isomerase family. LeuC type 2 subfamily. Heterodimer of LeuC and LeuD. It depends on [4Fe-4S] cluster as a cofactor.

It carries out the reaction (2R,3S)-3-isopropylmalate = (2S)-2-isopropylmalate. Its pathway is amino-acid biosynthesis; L-leucine biosynthesis; L-leucine from 3-methyl-2-oxobutanoate: step 2/4. Its function is as follows. Catalyzes the isomerization between 2-isopropylmalate and 3-isopropylmalate, via the formation of 2-isopropylmaleate. This Hydrogenobaculum sp. (strain Y04AAS1) protein is 3-isopropylmalate dehydratase large subunit.